A 341-amino-acid polypeptide reads, in one-letter code: MTTMDHRFPSRIFVNERTSITREQLNSLLETYNVFYENQKNLHILYGQTEDGQLIVEGMLDIFWGVKRPIQLKIQDEKQISSFDLLKSPETFSSKGRMTRWGEFDDLYRISEMDKTQALAPEARHTPEDYLSCYSVLKQCADEEPESPLLYRTVSEAALVRKRMRAPEMYRKDRMGTLAKHRASINGHVYDHETSIFTPTFGSETKVRANSIMKTEEVIKQLLQKFKIENSPRDFALYIIFGTGEKRKLKKTDVPLLQRLIQGPSKSNARIFLMDKDAEEISSDVAPYINFHFSFLKSILQRLDEEEKMEIERIMAKFNTERAFILKCLQSKRAAKTETTV.

Ser-155 carries the post-translational modification Phosphoserine. Positions 190 to 278 (YDHETSIFTP…ARIFLMDKDA (89 aa)) constitute a Ras-associating domain. An SARAH domain is found at 285–332 (VAPYINFHFSFLKSILQRLDEEEKMEIERIMAKFNTERAFILKCLQSK).

Interacts with MOAP1. Interaction with activated KRAS is still a matter of debate.

In terms of biological role, involved in the induction of apoptosis. May act as a Ras effector protein. May suppress the serum-induced basal levels of NF-kappa-B. The chain is Ras association domain-containing protein 6 (Rassf6) from Rattus norvegicus (Rat).